We begin with the raw amino-acid sequence, 442 residues long: D-serine dehydratase (442 aa).

Lysine 118 bears the N6-(pyridoxal phosphate)lysine mark.

This sequence belongs to the serine/threonine dehydratase family. DsdA subfamily. Monomer. It depends on pyridoxal 5'-phosphate as a cofactor.

The catalysed reaction is D-serine = pyruvate + NH4(+). The sequence is that of D-serine dehydratase from Shigella dysenteriae serotype 1 (strain Sd197).